A 536-amino-acid chain; its full sequence is CTP synthase (536 aa).

Positions 1-267 (MTKFIFVTGG…DDIVIKRLQL (267 aa)) are amidoligase domain. Ser13 is a binding site for CTP. Ser13 is a binding site for UTP. 14 to 19 (SLGKGI) contacts ATP. Tyr54 contributes to the L-glutamine binding site. Asp71 is an ATP binding site. The Mg(2+) site is built by Asp71 and Glu141. CTP contacts are provided by residues 148–150 (DIE), 188–193 (KTKPTQ), and Lys224. UTP is bound by residues 188–193 (KTKPTQ) and Lys224. 240 to 242 (RDA) lines the ATP pocket. Residues 293–535 (TIGLVGKYVS…IEASLKYQQN (243 aa)) form the Glutamine amidotransferase type-1 domain. Residue Gly355 coordinates L-glutamine. Residue Cys382 is the Nucleophile; for glutamine hydrolysis of the active site. Residues 383–386 (LGMQ), Glu406, and Arg463 each bind L-glutamine. Active-site residues include His508 and Glu510.

This sequence belongs to the CTP synthase family. As to quaternary structure, homotetramer.

It carries out the reaction UTP + L-glutamine + ATP + H2O = CTP + L-glutamate + ADP + phosphate + 2 H(+). The enzyme catalyses L-glutamine + H2O = L-glutamate + NH4(+). It catalyses the reaction UTP + NH4(+) + ATP = CTP + ADP + phosphate + 2 H(+). It functions in the pathway pyrimidine metabolism; CTP biosynthesis via de novo pathway; CTP from UDP: step 2/2. Its activity is regulated as follows. Allosterically activated by GTP, when glutamine is the substrate; GTP has no effect on the reaction when ammonia is the substrate. The allosteric effector GTP functions by stabilizing the protein conformation that binds the tetrahedral intermediate(s) formed during glutamine hydrolysis. Inhibited by the product CTP, via allosteric rather than competitive inhibition. Its function is as follows. Catalyzes the ATP-dependent amination of UTP to CTP with either L-glutamine or ammonia as the source of nitrogen. Regulates intracellular CTP levels through interactions with the four ribonucleotide triphosphates. This Staphylococcus aureus (strain NCTC 8325 / PS 47) protein is CTP synthase.